The primary structure comprises 91 residues: Acylphosphatase (91 aa).

An Acylphosphatase-like domain is found at 3–90; sequence RVSMIVSGQV…CGYSIFTIRR (88 aa). Catalysis depends on residues Arg18 and Asn36.

This sequence belongs to the acylphosphatase family.

The enzyme catalyses an acyl phosphate + H2O = a carboxylate + phosphate + H(+). The sequence is that of Acylphosphatase (acyP) from Methanospirillum hungatei JF-1 (strain ATCC 27890 / DSM 864 / NBRC 100397 / JF-1).